Consider the following 115-residue polypeptide: Mediator of RNA polymerase II transcription subunit 9 (115 aa).

Residues 1–31 are disordered; it reads MATGGTVRPAEEPEEEEEEEDEAVEEEEEED. Over residues 12-31 the composition is skewed to acidic residues; it reads EPEEEEEEEDEAVEEEEEED. A coiled-coil region spans residues 31–107; that stretch reads DYTFLPLVHD…SELLQKYKSL (77 aa).

It belongs to the Mediator complex subunit 9 family. Component of the Mediator complex.

The protein localises to the nucleus. In terms of biological role, component of the Mediator complex, a coactivator involved in the regulated transcription of nearly all RNA polymerase II-dependent genes. Mediator functions as a bridge to convey information from gene-specific regulatory proteins to the basal RNA polymerase II transcription machinery. Mediator is recruited to promoters by direct interactions with regulatory proteins and serves as a scaffold for the assembly of a functional preinitiation complex with RNA polymerase II and the general transcription factors. This chain is Mediator of RNA polymerase II transcription subunit 9 (med9), found in Xenopus laevis (African clawed frog).